The sequence spans 1040 residues: BEM1-interacting protein 2 (1040 aa).

The interval 1 to 39 (MSNDREVPTLSQLNTTVSRDKDVSDTLSPDFDSKGSATG) is disordered. A compositionally biased stretch (polar residues) spans 8 to 17 (PTLSQLNTTV). Phosphoserine occurs at positions 18, 24, and 28. Residues 43–107 (GNFPMYIAIN…PVVFTQKITV (65 aa)) enclose the SH3 domain. One can recognise an SAM domain in the interval 266 to 330 (WSPEEITAYF…FKEIEKIKEA (65 aa)). Disordered stretches follow at residues 365-412 (YRGH…SQEA), 437-478 (VSPR…WQSP), and 491-744 (IDQY…ARPV). Residues 372 to 397 (TSQSLEDLPSQQNFIPTPRNTRNSSA) show a composition bias toward polar residues. A compositionally biased stretch (pro residues) spans 444 to 457 (KPPSYPSPAQPPKS). Position 450 is a phosphoserine (Ser450). Residues 459 to 478 (LLNNTRTSPSPAQLYSWQSP) show a composition bias toward polar residues. The span at 495–505 (SSSDSNFNSRS) shows a compositional bias: low complexity. Phosphoserine occurs at positions 519, 523, and 546. The span at 557–570 (SSDRKSSCSSHEEE) shows a compositional bias: basic and acidic residues. A compositionally biased stretch (polar residues) spans 573–598 (QETMNTFERPTSSIYADGSTIASISN). Basic and acidic residues predominate over residues 600–609 (KLAHEKEGKK). Positions 632–648 (LKRSSSASRTSSFKKSS) are enriched in low complexity. Ser652 carries the post-translational modification Phosphoserine. Residues 654 to 684 (FRQQFTDNAARSSSPEENPITSMPSEKNSSP) are compositionally biased toward polar residues. Residues 690-701 (SSKKSRSKRRSV) are compositionally biased toward basic residues. Residues 702 to 732 (SAKEAEIFTETVKDDKNKRSASEAIKGETLK) show a composition bias toward basic and acidic residues. A PH domain is found at 768–887 (DADFSGWMSK…WMAALIKTTI (120 aa)). Residues 943–957 (QLQQQQHDNNQGQAD) are compositionally biased toward low complexity. 2 disordered regions span residues 943 to 986 (QLQQ…NNTT) and 1007 to 1040 (VARN…TDKI). Residues 973–986 (TISTPNLSSANNTT) are compositionally biased toward polar residues. A compositionally biased stretch (basic and acidic residues) spans 1015 to 1024 (GTEKKGKFST).

Interacts with BEM1. Interacts with TOS7.

Its subcellular location is the bud. The protein localises to the bud neck. Its function is as follows. Protein involved in bud formation. Functions redundantly with BOI1 to promote the fusion of secretory vesicles with the plasma membrane at sites of polarized growth. Acts as an abscission inhibitor during cytokinesis in response to chromatin bridges. In Saccharomyces cerevisiae (strain ATCC 204508 / S288c) (Baker's yeast), this protein is BEM1-interacting protein 2.